The following is a 49-amino-acid chain: Osteocalcin (49 aa).

Residues 1–47 (YLDSGLGAPVPYPDPLEPKREVCELNPNCDELADHIGFQEAYQRFYG) form the Gla domain. Ca(2+) is bound by residues Glu17, Glu21, Glu24, and Asp30. Residues Glu17, Glu21, and Glu24 each carry the 4-carboxyglutamate modification. Cys23 and Cys29 are disulfide-bonded.

This sequence belongs to the osteocalcin/matrix Gla protein family. Post-translationally, gamma-carboxyglutamate residues are formed by vitamin K dependent carboxylation by GGCX. These residues are essential for the binding of calcium. Decarboxylation promotes the hormone activity.

The protein localises to the secreted. The carboxylated form is one of the main organic components of the bone matrix, which constitutes 1-2% of the total bone protein. It acts as a negative regulator of bone formation and is required to limit bone formation without impairing bone resorption or mineralization. The carboxylated form binds strongly to apatite and calcium. Functionally, the uncarboxylated form acts as a hormone secreted by osteoblasts, which regulates different cellular processes, such as energy metabolism, male fertility and brain development. Regulates of energy metabolism by acting as a hormone favoring pancreatic beta-cell proliferation, insulin secretion and sensitivity and energy expenditure. Uncarboxylated osteocalcin hormone also promotes testosterone production in the testes: acts as a ligand for G protein-coupled receptor GPRC6A at the surface of Leydig cells, initiating a signaling response that promotes the expression of enzymes required for testosterone synthesis in a CREB-dependent manner. Also acts as a regulator of brain development: osteocalcin hormone crosses the blood-brain barrier and acts as a ligand for GPR158 on neurons, initiating a signaling response that prevents neuronal apoptosis in the hippocampus, favors the synthesis of all monoamine neurotransmitters and inhibits that of gamma-aminobutyric acid (GABA). Osteocalcin also crosses the placenta during pregnancy and maternal osteocalcin is required for fetal brain development. In Canis lupus familiaris (Dog), this protein is Osteocalcin (BGLAP).